We begin with the raw amino-acid sequence, 310 residues long: Probable L,D-transpeptidase ErfK/SrfK (310 aa).

An N-terminal signal peptide occupies residues 1-21 (MRRVNILCSFALLFASHTSLA). The L,D-TPase catalytic domain occupies 96–231 (KGIVVNVAEM…VPVGTRVQII (136 aa)). The active-site Proton donor/acceptor is H191. C207 (nucleophile) is an active-site residue.

Belongs to the YkuD family. Interacts with DsbG.

Its subcellular location is the periplasm. It functions in the pathway cell wall biogenesis; peptidoglycan biosynthesis. Responsible, at least in part, for anchoring of the major outer membrane lipoprotein (Lpp, also known as the Braun lipoprotein) to the peptidoglycan via a meso-diaminopimelyl-L-Lys- bond on the terminal residue of Lpp. This chain is Probable L,D-transpeptidase ErfK/SrfK (erfK), found in Escherichia coli (strain K12).